Reading from the N-terminus, the 321-residue chain is Anthranilate phosphoribosyltransferase (321 aa).

5-phospho-alpha-D-ribose 1-diphosphate is bound by residues G72, 75–76 (GD), T80, 82–85 (NVST), 99–107 (KHGNVSVTS), and S111. An anthranilate-binding site is contributed by G72. S84 is a binding site for Mg(2+). N102 serves as a coordination point for anthranilate. Anthranilate is bound at residue R157. The Mg(2+) site is built by D216 and E217.

This sequence belongs to the anthranilate phosphoribosyltransferase family. Homodimer. Mg(2+) is required as a cofactor.

The catalysed reaction is N-(5-phospho-beta-D-ribosyl)anthranilate + diphosphate = 5-phospho-alpha-D-ribose 1-diphosphate + anthranilate. The protein operates within amino-acid biosynthesis; L-tryptophan biosynthesis; L-tryptophan from chorismate: step 2/5. In terms of biological role, catalyzes the transfer of the phosphoribosyl group of 5-phosphorylribose-1-pyrophosphate (PRPP) to anthranilate to yield N-(5'-phosphoribosyl)-anthranilate (PRA). The polypeptide is Anthranilate phosphoribosyltransferase (Methanococcus vannielii (strain ATCC 35089 / DSM 1224 / JCM 13029 / OCM 148 / SB)).